The chain runs to 72 residues: Large ribosomal subunit protein bL31 (72 aa).

Residues cysteine 16, cysteine 18, cysteine 37, and cysteine 40 each coordinate Zn(2+).

This sequence belongs to the bacterial ribosomal protein bL31 family. Type A subfamily. As to quaternary structure, part of the 50S ribosomal subunit. It depends on Zn(2+) as a cofactor.

Its function is as follows. Binds the 23S rRNA. The protein is Large ribosomal subunit protein bL31 of Pseudomonas fluorescens (strain Pf0-1).